The following is a 457-amino-acid chain: Chromosomal replication initiator protein DnaA (457 aa).

The interval 1–81 (MERDLSQLWQ…NNTDLVIKVQ (81 aa)) is domain I, interacts with DnaA modulators. The tract at residues 81 to 119 (QEGSKPAARKVVAQQEIANTPVQHSAPMPENEPQAAFRS) is domain II. The interval 120 to 337 (NLNQHHLFEN…GALNRVHANA (218 aa)) is domain III, AAA+ region. Residues glycine 165, glycine 167, lysine 168, and threonine 169 each coordinate ATP. The interval 338–457 (DFTGKAITID…WSNLIRTLSA (120 aa)) is domain IV, binds dsDNA.

Belongs to the DnaA family. As to quaternary structure, oligomerizes as a right-handed, spiral filament on DNA at oriC.

It localises to the cytoplasm. In terms of biological role, plays an essential role in the initiation and regulation of chromosomal replication. ATP-DnaA binds to the origin of replication (oriC) to initiate formation of the DNA replication initiation complex once per cell cycle. Binds the DnaA box (a 9 base pair repeat at the origin) and separates the double-stranded (ds)DNA. Forms a right-handed helical filament on oriC DNA; dsDNA binds to the exterior of the filament while single-stranded (ss)DNA is stabiized in the filament's interior. The ATP-DnaA-oriC complex binds and stabilizes one strand of the AT-rich DNA unwinding element (DUE), permitting loading of DNA polymerase. After initiation quickly degrades to an ADP-DnaA complex that is not apt for DNA replication. Binds acidic phospholipids. This Mannheimia succiniciproducens (strain KCTC 0769BP / MBEL55E) protein is Chromosomal replication initiator protein DnaA.